The sequence spans 584 residues: Alpha-glucosidase MAL12 (584 aa).

Catalysis depends on Asp214, which acts as the Nucleophile. Glu276 acts as the Proton donor in catalysis.

It belongs to the glycosyl hydrolase 13 family.

The enzyme catalyses Hydrolysis of terminal, non-reducing (1-&gt;4)-linked alpha-D-glucose residues with release of alpha-D-glucose.. In Saccharomyces cerevisiae (strain ATCC 204508 / S288c) (Baker's yeast), this protein is Alpha-glucosidase MAL12 (MAL12).